Reading from the N-terminus, the 156-residue chain is Small ribosomal subunit protein uS7 (156 aa).

The protein belongs to the universal ribosomal protein uS7 family. As to quaternary structure, part of the 30S ribosomal subunit. Contacts proteins S9 and S11.

Functionally, one of the primary rRNA binding proteins, it binds directly to 16S rRNA where it nucleates assembly of the head domain of the 30S subunit. Is located at the subunit interface close to the decoding center, probably blocks exit of the E-site tRNA. The protein is Small ribosomal subunit protein uS7 of Nitratidesulfovibrio vulgaris (strain ATCC 29579 / DSM 644 / CCUG 34227 / NCIMB 8303 / VKM B-1760 / Hildenborough) (Desulfovibrio vulgaris).